The chain runs to 341 residues: Phosphoribosylformylglycinamidine cyclo-ligase (341 aa).

It belongs to the AIR synthase family.

The protein localises to the cytoplasm. It carries out the reaction 2-formamido-N(1)-(5-O-phospho-beta-D-ribosyl)acetamidine + ATP = 5-amino-1-(5-phospho-beta-D-ribosyl)imidazole + ADP + phosphate + H(+). Its pathway is purine metabolism; IMP biosynthesis via de novo pathway; 5-amino-1-(5-phospho-D-ribosyl)imidazole from N(2)-formyl-N(1)-(5-phospho-D-ribosyl)glycinamide: step 2/2. The protein is Phosphoribosylformylglycinamidine cyclo-ligase of Thermosynechococcus vestitus (strain NIES-2133 / IAM M-273 / BP-1).